Here is a 548-residue protein sequence, read N- to C-terminus: Natural resistance-associated macrophage protein 1 (548 aa).

The segment covering 1–11 (MSGDTGPSKQG) has biased composition (polar residues). The tract at residues 1–38 (MSGDTGPSKQGGTRYGSISSPPSPGPQQAPPGGTYLGE) is disordered. Topologically, residues 1 to 55 (MSGDTGPSKQGGTRYGSISSPPSPGPQQAPPGGTYLGEKIPIPDTESGAFSLRKL) are cytoplasmic. The helical transmembrane segment at 56–73 (WAFTGPGFLMSIAFLDPG) threads the bilayer. Residues 74–82 (NIESDLQAG) are Extracellular-facing. Residues 83 to 102 (AVAGFKLLWVLLWATVLGLL) form a helical membrane-spanning segment. Residues 103-139 (CQRLAARLGVVTGKDLGEVCHLYYPKVPRILLWLTIE) are Cytoplasmic-facing. Residues 140 to 160 (LAIVGSDMQEVIGTAIAFSLL) form a helical membrane-spanning segment. Residues 161–164 (SAGR) are Extracellular-facing. A helical transmembrane segment spans residues 165–184 (IPLWGGVLITVVDTFFFLFL). Over 185-193 (DNYGLRKLE) the chain is Cytoplasmic. The chain crosses the membrane as a helical span at residues 194 to 214 (AFFGFLITIMALTFGYEYVVA). At 215-237 (QPAQGALLQGLFLPSCRGCGQPE) the chain is on the extracellular side. Residues 238–256 (LLQAVGIIGAIIMPHNIYL) traverse the membrane as a helical segment. Residues 257-284 (HSSLVKSREVDRSRRADIREANMYFLIE) are Cytoplasmic-facing. Residues 285–304 (ATIALSVSFLINLFVMAVFG) traverse the membrane as a helical segment. Residues 305-346 (QAFYKQTNQAAFNICAKSSLHDYAPIFPRNNLTVAVDIYQGG) lie on the Extracellular side of the membrane. N-linked (GlcNAc...) asparagine glycosylation occurs at N335. Residues 347–366 (VILGCLFGPAALYIWAVGLL) traverse the membrane as a helical segment. Residues 367–397 (AAGQSSTMTGTYAGQFVMEGFLKLRWSRFAR) lie on the Cytoplasmic side of the membrane. A helical membrane pass occupies residues 398–415 (VLLTRSCAILPTVLLAVF). Residues 416–426 (RDLRDLSGLND) lie on the Extracellular side of the membrane. Residues 427–447 (LLNVLQSLLLPFAVLPILTFT) traverse the membrane as a helical segment. Topologically, residues 448–463 (SMPALMQEFANGLVSK) are cytoplasmic. A helical transmembrane segment spans residues 464 to 485 (VITSSIMVLVCAVNLYFVISYV). The Extracellular segment spans residues 486-493 (PSLPHPAY). A helical transmembrane segment spans residues 494-513 (FSLVALLAAAYLGLTTYLVW). The Cytoplasmic portion of the chain corresponds to 514-548 (TCLITQGATFLAHNSHQRFLYGLPEEDQEKGRTSG).

The protein belongs to the NRAMP family.

The protein resides in the late endosome membrane. Its subcellular location is the lysosome membrane. The catalysed reaction is Zn(2+)(in) + H(+)(out) = Zn(2+)(out) + H(+)(in). The enzyme catalyses Fe(2+)(in) + H(+)(out) = Fe(2+)(out) + H(+)(in). It catalyses the reaction Mn(2+)(in) + H(+)(out) = Mn(2+)(out) + H(+)(in). Macrophage-specific antiporter that fluxes metal ions in either direction against a proton gradient. Localized to late endosomal lysosomal membranes, delivers bivalent cations from the cytosol into these acidic compartments where they may directly affect antimicrobial activity. Involved in iron metabolism and host natural resistance to infection with intracellular parasites. Pathogen resistance involves sequestration of Fe(2+) and Mn(2+), cofactors of both prokaryotic and eukaryotic catalases and superoxide dismutases, not only to protect the macrophage against its own generation of reactive oxygen species, but to deny the cations to the pathogen for synthesis of its protective enzymes. The protein is Natural resistance-associated macrophage protein 1 (SLC11A1) of Bubalus bubalis (Domestic water buffalo).